Reading from the N-terminus, the 78-residue chain is Beta-defensin 105A (78 aa).

Positions 1–27 (MALIRKTFYFLFAVFFVLVQLPSECQA) are cleaved as a signal peptide. Cystine bridges form between cysteine 43/cysteine 74, cysteine 53/cysteine 67, and cysteine 57/cysteine 73.

Belongs to the beta-defensin family.

The protein resides in the secreted. In terms of biological role, has antimicrobial activity. The chain is Beta-defensin 105A (DEFB105A) from Pongo pygmaeus (Bornean orangutan).